A 209-amino-acid chain; its full sequence is Uracil phosphoribosyltransferase (209 aa).

5-phospho-alpha-D-ribose 1-diphosphate-binding positions include Arg79, Arg104, and 131–139 (DPMLATGGS). Residues Val194 and 199–201 (GDA) contribute to the uracil site. Position 200 (Asp200) interacts with 5-phospho-alpha-D-ribose 1-diphosphate.

Belongs to the UPRTase family. Mg(2+) is required as a cofactor.

It carries out the reaction UMP + diphosphate = 5-phospho-alpha-D-ribose 1-diphosphate + uracil. It functions in the pathway pyrimidine metabolism; UMP biosynthesis via salvage pathway; UMP from uracil: step 1/1. Its activity is regulated as follows. Allosterically activated by GTP. Catalyzes the conversion of uracil and 5-phospho-alpha-D-ribose 1-diphosphate (PRPP) to UMP and diphosphate. The protein is Uracil phosphoribosyltransferase of Bacillus cytotoxicus (strain DSM 22905 / CIP 110041 / 391-98 / NVH 391-98).